We begin with the raw amino-acid sequence, 324 residues long: Elongation factor P--(R)-beta-lysine ligase (324 aa).

75 to 77 (SPE) is a substrate binding site. ATP is bound by residues 99-101 (RNK) and N108. Y117 is a substrate binding site. ATP is bound at residue 243–244 (EL). Position 250 (E250) interacts with substrate. G299 is a binding site for ATP.

The protein belongs to the class-II aminoacyl-tRNA synthetase family. EpmA subfamily. In terms of assembly, homodimer.

It catalyses the reaction D-beta-lysine + L-lysyl-[protein] + ATP = N(6)-((3R)-3,6-diaminohexanoyl)-L-lysyl-[protein] + AMP + diphosphate + H(+). Functionally, with EpmB is involved in the beta-lysylation step of the post-translational modification of translation elongation factor P (EF-P). Catalyzes the ATP-dependent activation of (R)-beta-lysine produced by EpmB, forming a lysyl-adenylate, from which the beta-lysyl moiety is then transferred to the epsilon-amino group of a conserved specific lysine residue in EF-P. This Buchnera aphidicola subsp. Acyrthosiphon pisum (strain 5A) protein is Elongation factor P--(R)-beta-lysine ligase.